A 211-amino-acid polypeptide reads, in one-letter code: Protein-methionine-sulfoxide reductase heme-binding subunit MsrQ (211 aa).

4 helical membrane-spanning segments follow: residues 17-37, 82-102, 116-136, and 153-173; these read LAGLLPFLWLVWAINHGGLGA, LWCFAWATLHLTSYALLELGV, PYLTLGIISWVILLALAFTST, and FVYLVAILAPIHYLWSVKIIS.

Belongs to the MsrQ family. As to quaternary structure, heterodimer of a catalytic subunit (MsrP) and a heme-binding subunit (MsrQ). Requires FMN as cofactor. It depends on heme b as a cofactor.

The protein resides in the cell inner membrane. In terms of biological role, part of the MsrPQ system that repairs oxidized periplasmic proteins containing methionine sulfoxide residues (Met-O), using respiratory chain electrons. Thus protects these proteins from oxidative-stress damage caused by reactive species of oxygen and chlorine generated by the host defense mechanisms. MsrPQ is essential for the maintenance of envelope integrity under bleach stress, rescuing a wide series of structurally unrelated periplasmic proteins from methionine oxidation, including the primary periplasmic chaperone SurA and the lipoprotein Pal. MsrQ provides electrons for reduction to the reductase catalytic subunit MsrP, using the quinone pool of the respiratory chain. The polypeptide is Protein-methionine-sulfoxide reductase heme-binding subunit MsrQ (Shigella sonnei (strain Ss046)).